A 106-amino-acid polypeptide reads, in one-letter code: Nucleoid-associated protein RPA0616 (106 aa).

It belongs to the YbaB/EbfC family. In terms of assembly, homodimer.

It localises to the cytoplasm. The protein resides in the nucleoid. In terms of biological role, binds to DNA and alters its conformation. May be involved in regulation of gene expression, nucleoid organization and DNA protection. This chain is Nucleoid-associated protein RPA0616, found in Rhodopseudomonas palustris (strain ATCC BAA-98 / CGA009).